Here is a 294-residue protein sequence, read N- to C-terminus: Phosphoribosylaminoimidazole-succinocarboxamide synthase (294 aa).

This sequence belongs to the SAICAR synthetase family.

The catalysed reaction is 5-amino-1-(5-phospho-D-ribosyl)imidazole-4-carboxylate + L-aspartate + ATP = (2S)-2-[5-amino-1-(5-phospho-beta-D-ribosyl)imidazole-4-carboxamido]succinate + ADP + phosphate + 2 H(+). Its pathway is purine metabolism; IMP biosynthesis via de novo pathway; 5-amino-1-(5-phospho-D-ribosyl)imidazole-4-carboxamide from 5-amino-1-(5-phospho-D-ribosyl)imidazole-4-carboxylate: step 1/2. In Rhodococcus opacus (strain B4), this protein is Phosphoribosylaminoimidazole-succinocarboxamide synthase.